The following is a 92-amino-acid chain: UPF0223 protein SPy_1248/M5005_Spy0958 (92 aa).

The protein belongs to the UPF0223 family.

This is UPF0223 protein SPy_1248/M5005_Spy0958 from Streptococcus pyogenes serotype M1.